The following is a 313-amino-acid chain: Porphobilinogen deaminase (313 aa).

Cysteine 242 carries the S-(dipyrrolylmethanemethyl)cysteine modification.

The protein belongs to the HMBS family. Monomer. Requires dipyrromethane as cofactor.

It carries out the reaction 4 porphobilinogen + H2O = hydroxymethylbilane + 4 NH4(+). Its pathway is porphyrin-containing compound metabolism; protoporphyrin-IX biosynthesis; coproporphyrinogen-III from 5-aminolevulinate: step 2/4. Tetrapolymerization of the monopyrrole PBG into the hydroxymethylbilane pre-uroporphyrinogen in several discrete steps. In Yersinia pseudotuberculosis serotype IB (strain PB1/+), this protein is Porphobilinogen deaminase.